We begin with the raw amino-acid sequence, 125 residues long: uncharacterized protein (125 aa).

It belongs to the asfivirus B125R family.

This is an uncharacterized protein from African swine fever virus (isolate Tick/Malawi/Lil 20-1/1983) (ASFV).